A 449-amino-acid chain; its full sequence is Plasmepsin IV (449 aa).

Residues 1–37 lie on the Cytoplasmic side of the membrane; it reads MALTVKEEEFSNTLIKNASAFDRLKLGNLKNLKIQKK. A propeptide spanning residues 1-121 is cleaved from the precursor; that stretch reads MALTVKEEEF…SGYAQKGYLG (121 aa). Residues 38–58 form a helical; Signal-anchor for type II membrane protein membrane-spanning segment; that stretch reads LQFLYLILFVLITGVFFFFLI. Over 59–449 the chain is Lumenal; it reads GNFYSHRKLY…SVGFAVAKNL (391 aa). A Peptidase A1 domain is found at 137-444; the sequence is FYGEGQIGTN…DYEKESVGFA (308 aa). Residue Asp-155 is part of the active site. Cys-168 and Cys-173 are oxidised to a cystine. The active site involves Asp-335. An intrachain disulfide couples Cys-370 to Cys-406.

Belongs to the peptidase A1 family. Component of the hemozoin formation complex (HFC) composed of falcipains FP2A and/or FP2B, plasmepsins PMII, PMIII/HAP and PMIV, heme detoxifying protein HDP and falcilysin FLN. The HFC complex is involved in hemoglobin degradation and detoxification of heme in the food vacuole during the asexual blood stage. Post-translationally, proteolytically cleaved into the soluble active mature form by cysteine proteases in the digestive vacuole of trophozoites. Proteolysis requires an acidic environment. Autoprocessing or transprocessing by other plasmepsins such as PMII may serve as an alternate activation system.

The protein localises to the membrane. It localises to the vacuole lumen. It catalyses the reaction Hydrolysis of the bonds linking certain hydrophobic residues in hemoglobin or globin. Also cleaves small molecules substrates such as Ala-Leu-Glu-Arg-Thr-Phe-|-Phe(NO2)-Ser-Phe-Pro-Thr.. Its activity is regulated as follows. Inhibited by pepstatin A. In terms of biological role, during the asexual blood stage, catalyzes the cleavage of denatured host hemoglobin (Hb) or globins. Digestion of host Hb is an essential step which provides the parasite with amino acids for protein synthesis, and regulates osmolarity. The polypeptide is Plasmepsin IV (Plasmodium falciparum (isolate HB3)).